Here is a 132-residue protein sequence, read N- to C-terminus: Cell division protein FtsL (132 aa).

The Cytoplasmic segment spans residues 1-50 (MAELKKMRHNHYDVPVMDEPVIASQIKKTNQKKESFQLPQKKLNKISVFE). The helical transmembrane segment at 51–71 (KILCILLLCSIVGIVVITIQI) threads the bilayer. At 72–132 (RTTISETMNN…EIDGNLRKVK (61 aa)) the chain is on the extracellular side.

This sequence belongs to the FtsL family.

It localises to the cell membrane. Functionally, essential cell division protein. This Melissococcus plutonius (strain ATCC 35311 / DSM 29964 / CIP 104052 / LMG 20360 / NCIMB 702443) protein is Cell division protein FtsL.